The chain runs to 483 residues: Alpha-tubulin N-acetyltransferase (483 aa).

Residues 1–186 (MEFRFNMHPL…NNFVVYEGFF (186 aa)) form the N-acetyltransferase domain. Residues 120–133 (FYVHESRQRGGLGR) and 156–165 (SEKLLGFLQK) contribute to the acetyl-CoA site. Disordered stretches follow at residues 204 to 231 (TASPNTNLFGPTFTTTEERRRSTSQTRT), 330 to 395 (ETLP…VLGS), and 437 to 472 (SVKINRPIGKSGTRGSLHDDNESVHSNGSQQGGGGH). The segment covering 347-369 (YDFHPHHLELHDDTEGGGSHRDQ) has biased composition (basic and acidic residues). Positions 370 to 383 (SLSPQSVSQQASPV) are enriched in low complexity.

It belongs to the acetyltransferase ATAT1 family.

The catalysed reaction is L-lysyl-[alpha-tubulin] + acetyl-CoA = N(6)-acetyl-L-lysyl-[alpha-tubulin] + CoA + H(+). Specifically acetylates 'Lys-40' in alpha-tubulin on the lumenal side of microtubules. Promotes microtubule destabilization and accelerates microtubule dynamics; this activity may be independent of acetylation activity. Acetylates alpha-tubulin with a slow enzymatic rate, due to a catalytic site that is not optimized for acetyl transfer. Enters the microtubule through each end and diffuses quickly throughout the lumen of microtubules. Acetylates only long/old microtubules because of its slow acetylation rate since it does not have time to act on dynamically unstable microtubules before the enzyme is released. The chain is Alpha-tubulin N-acetyltransferase from Anopheles gambiae (African malaria mosquito).